Consider the following 699-residue polypeptide: D-(-)-3-hydroxybutyrate oligomer hydrolase (699 aa).

Residues 1-19 (MNPSLCIAVAFACPLSALA) form the signal peptide. Residue Ser-303 is the Charge relay system of the active site.

The protein belongs to the D-(-)-3-hydroxybutyrate oligomer hydrolase family.

The protein localises to the secreted. The catalysed reaction is (3R)-hydroxybutanoate dimer + H2O = 2 (R)-3-hydroxybutanoate + H(+). Its pathway is lipid metabolism; butanoate metabolism. Participates in the degradation of poly-3-hydroxybutyrate (PHB). It works downstream of poly(3-hydroxybutyrate) depolymerase, hydrolyzing D(-)-3-hydroxybutyrate oligomers of various length (3HB-oligomers) into 3HB-monomers. The polypeptide is D-(-)-3-hydroxybutyrate oligomer hydrolase (Azoarcus sp. (strain BH72)).